Reading from the N-terminus, the 317-residue chain is Malate dehydrogenase (317 aa).

Residues glycine 7–glycine 13 and aspartate 34 contribute to the NAD(+) site. The substrate site is built by arginine 81 and arginine 87. NAD(+) is bound by residues asparagine 94 and valine 117–asparagine 119. Substrate is bound by residues asparagine 119 and arginine 153. Residue histidine 177 is the Proton acceptor of the active site. Residue methionine 231 coordinates NAD(+).

The protein belongs to the LDH/MDH superfamily. MDH type 1 family. As to quaternary structure, homodimer.

The enzyme catalyses (S)-malate + NAD(+) = oxaloacetate + NADH + H(+). Functionally, catalyzes the reversible oxidation of malate to oxaloacetate. The protein is Malate dehydrogenase of Actinobacillus pleuropneumoniae serotype 5b (strain L20).